We begin with the raw amino-acid sequence, 2477 residues long: Spectrin alpha chain, non-erythrocytic 1 (2477 aa).

Positions Met-1 to Asp-14 are N-terminal domain. Spectrin repeat units lie at residues Arg-45–Leu-146, Lys-150–Leu-251, Glu-256–Asn-358, Tyr-361–Gln-465, Asp-468–Ala-570, His-574–Glu-676, Gln-679–Ala-781, Arg-785–Asp-888, Gln-891–Lys-969, and Leu-1096–Leu-1162. Residues Thr-967–Pro-1026 enclose the SH3 domain. Phosphotyrosine is present on Tyr-1176. 10 Spectrin repeats span residues Glu-1234–Gly-1336, His-1339–Asp-1442, Glu-1446–Glu-1549, Thr-1552–Glu-1661, Lys-1664–Glu-1767, His-1769–Glu-1873, Glu-1876–Glu-1979, Phe-1983–Glu-2086, Leu-2097–Gln-2199, and Leu-2211–Gln-2315. Positions His-2257 to Asn-2477 are C-terminal domain. 3 EF-hand domains span residues Glu-2328–Asp-2363, Glu-2371–Glu-2406, and Lys-2409–Asp-2444. 10 residues coordinate Ca(2+): Asp-2341, Asp-2343, Ser-2345, Arg-2347, Glu-2352, Asp-2384, Asn-2386, Asp-2388, His-2390, and Glu-2395.

It belongs to the spectrin family. As to quaternary structure, like erythrocyte spectrin, the spectrin-like proteins are capable of forming dimers which can further associate to tetramers. Interacts with ACP1. Phosphorylation of Tyr-1176 decreases sensitivity to cleavage by calpain in vitro.

Its subcellular location is the cytoplasm. The protein resides in the cytoskeleton. It localises to the cell cortex. Morphologically, spectrin-like proteins appear to be related to spectrin, showing a flexible rod-like structure. They can bind actin but seem to differ in their calmodulin-binding activity. In nonerythroid tissues, spectrins, in association with some other proteins, may play an important role in membrane organization. In Gallus gallus (Chicken), this protein is Spectrin alpha chain, non-erythrocytic 1 (SPTAN1).